A 172-amino-acid polypeptide reads, in one-letter code: Inorganic pyrophosphatase (172 aa).

Substrate contacts are provided by Lys-26, Arg-40, and Tyr-52. 3 residues coordinate Mg(2+): Asp-62, Asp-67, and Asp-99. Position 138 (Tyr-138) interacts with substrate.

The protein belongs to the PPase family. In terms of assembly, homohexamer. Requires Mg(2+) as cofactor.

The protein localises to the cytoplasm. The enzyme catalyses diphosphate + H2O = 2 phosphate + H(+). Its function is as follows. Catalyzes the hydrolysis of inorganic pyrophosphate (PPi) forming two phosphate ions. This Saccharolobus solfataricus (strain ATCC 35092 / DSM 1617 / JCM 11322 / P2) (Sulfolobus solfataricus) protein is Inorganic pyrophosphatase.